The following is a 145-amino-acid chain: Hemoglobin fetal subunit beta (145 aa).

Residues 1–145 (MLTAEEKASV…VANALAHRYH (145 aa)) form the Globin domain. Positions 62 and 91 each coordinate heme b.

It belongs to the globin family. As to quaternary structure, heterotetramer of two alpha chains and two beta chains.

The polypeptide is Hemoglobin fetal subunit beta (Ovis aries (Sheep)).